We begin with the raw amino-acid sequence, 277 residues long: Putative phosphoenolpyruvate synthase regulatory protein (277 aa).

157-164 (GVSRSGKT) provides a ligand contact to ADP.

The protein belongs to the pyruvate, phosphate/water dikinase regulatory protein family. PSRP subfamily.

The catalysed reaction is [pyruvate, water dikinase] + ADP = [pyruvate, water dikinase]-phosphate + AMP + H(+). The enzyme catalyses [pyruvate, water dikinase]-phosphate + phosphate + H(+) = [pyruvate, water dikinase] + diphosphate. Its function is as follows. Bifunctional serine/threonine kinase and phosphorylase involved in the regulation of the phosphoenolpyruvate synthase (PEPS) by catalyzing its phosphorylation/dephosphorylation. This chain is Putative phosphoenolpyruvate synthase regulatory protein, found in Vibrio atlanticus (strain LGP32) (Vibrio splendidus (strain Mel32)).